The chain runs to 65 residues: Conotoxin Cal1.5 (65 aa).

Positions methionine 1–alanine 18 are cleaved as a signal peptide. Residues valine 19–leucine 49 constitute a propeptide that is removed on maturation. Intrachain disulfides connect cysteine 52/cysteine 62 and cysteine 53/cysteine 59. 4-hydroxyproline is present on proline 61.

Belongs to the conotoxin T superfamily. Expressed by the venom duct.

The protein localises to the secreted. Functionally, probable neurotoxin with unknown target. Possibly targets ion channels. This chain is Conotoxin Cal1.5, found in Californiconus californicus (California cone).